Reading from the N-terminus, the 754-residue chain is ATP-dependent zinc metalloprotease FtsH (754 aa).

The Cytoplasmic segment spans residues Met1–Ser9. A helical membrane pass occupies residues Leu10–Phe30. At Leu31 to Ser186 the chain is on the extracellular side. Residues Ser187–Phe207 traverse the membrane as a helical segment. Topologically, residues Arg208–Gln754 are cytoplasmic. Gly277 to Thr284 contacts ATP. Residue His499 coordinates Zn(2+). Glu500 is a catalytic residue. Zn(2+) is bound by residues His503 and Asp577. Residues Gln713–Gln754 are disordered. Residues Asp743 to Gln754 are compositionally biased toward basic and acidic residues.

This sequence in the central section; belongs to the AAA ATPase family. It in the C-terminal section; belongs to the peptidase M41 family. Homohexamer. The cofactor is Zn(2+).

The protein resides in the cell membrane. In terms of biological role, acts as a processive, ATP-dependent zinc metallopeptidase for both cytoplasmic and membrane proteins. Plays a role in the quality control of integral membrane proteins. The chain is ATP-dependent zinc metalloprotease FtsH from Mesomycoplasma conjunctivae (strain ATCC 25834 / NCTC 10147 / HRC/581) (Mycoplasma conjunctivae).